The following is a 338-amino-acid chain: Secretory carrier-associated membrane protein 1 (338 aa).

Residues 1 to 64 (MSDFDSNPFA…NVPNTQPAIM (64 aa)) form a disordered region. N-acetylserine is present on Ser-2. Residue Ser-2 is modified to Phosphoserine. At 2–155 (SDFDSNPFAD…QKTVKLMYYL (154 aa)) the chain is on the cytoplasmic side. At Thr-45 the chain carries Phosphothreonine. Residues 156-176 (WMFHAVTLFLNIFGCLAWFCV) traverse the membrane as a helical segment. Residues 177–181 (DSARA) lie on the Lumenal side of the membrane. The chain crosses the membrane as a helical span at residues 182 to 202 (VDFGLSILWFLLFTPCSFVCW). Residues 203–218 (YRPLYGAFRSDSSFRF) are Cytoplasmic-facing. A helical transmembrane segment spans residues 219-239 (FVFFFVYICQFAVHVLQAAGF). Residues 240–261 (HNWGNCGWISSLTGLNQNIPVG) are Lumenal-facing. A helical membrane pass occupies residues 262-282 (IMMIIIAALFTASAVISLVMF). The Cytoplasmic segment spans residues 283–338 (KKVHGLYRTTGASFEKAQQEFATGVMSNKTVQTAAANAASTAASSAAQNAFKGNQI).

This sequence belongs to the SCAMP family. Interacts with SYNRG and ITSN1. Interacts with SLC9A7. Widely expressed, with highest expression in brain.

The protein resides in the golgi apparatus. It localises to the trans-Golgi network membrane. It is found in the recycling endosome membrane. Its function is as follows. Functions in post-Golgi recycling pathways. Acts as a recycling carrier to the cell surface. The chain is Secretory carrier-associated membrane protein 1 (SCAMP1) from Homo sapiens (Human).